Consider the following 343-residue polypeptide: MEYARLGDSGLKVSKVILGCMGYGSPEWQGWVLNEEESLPLIEHAYNKGIRTWDTADMYSHGKSEEIVGKALKKYNIPRSRVVILTKCYFGVDDQGNFPSPLSTGRQNEGDYLNRVGLSRRHILEAVDASVERLGTYIDVLQIHRLDRETPREEIMRALNDVVESGKARYIGASSMAAWEFQTLQNIAIRNGWHKFISMQNYHNLIAREEEREMIPYCLDSGVSLIPWSPVARGALARPWASRSTLRENTDAGISILVRARESESDKAIIDRVEELADKKGISMAQVAIAWSLSHPSEYPIVGLNTKDRIDEAVASVQVKLTPEEIQYLEEPYVPKAIHPGER.

Tyr-59 acts as the Proton donor in catalysis. His-144 contributes to the substrate binding site. 229-239 contributes to the NADP(+) binding site; that stretch reads SPVARGALARP.

This sequence belongs to the aldo/keto reductase family. Aldo/keto reductase 2 subfamily.

It catalyses the reaction (2S)-versicolorone + NADP(+) = 1'-hydroxyversicolorone + NADPH + H(+). The catalysed reaction is (3S)-versiconol acetate + NADP(+) = (2S,3S)-versiconal hemiacetal acetate + NADPH + H(+). The enzyme catalyses (S)-versiconol + NADP(+) = (2S-3S)-versiconal hemiacetal + NADPH + H(+). Catalyzes 3 reactions: from hydroxyversicolorone (HVN) to versicolorone (VONE), from versiconal hemiacetal acetate (VHA) to versiconol acetate (VOAc) and from versiconal (VHOH) to versiconol (VOH). Probably not an aflatoxin biosynthesis gene: may be involved in the vertical branching steps connecting the main pathway from HVN to VHOH with the side pathway from VONE to VOH. The polypeptide is Versiconal hemiacetal acetate reductase (vrdA) (Aspergillus parasiticus).